The following is a 186-amino-acid chain: Crossover junction endodeoxyribonuclease RuvC (186 aa).

Catalysis depends on residues Asp14, Glu73, and Asp145. Residues Asp14, Glu73, and Asp145 each contribute to the Mg(2+) site. Positions 162-186 (GRSLPPSRGRRRSGSRQRWRDYRPS) are disordered. Positions 169-178 (RGRRRSGSRQ) are enriched in basic residues.

It belongs to the RuvC family. As to quaternary structure, homodimer which binds Holliday junction (HJ) DNA. The HJ becomes 2-fold symmetrical on binding to RuvC with unstacked arms; it has a different conformation from HJ DNA in complex with RuvA. In the full resolvosome a probable DNA-RuvA(4)-RuvB(12)-RuvC(2) complex forms which resolves the HJ. It depends on Mg(2+) as a cofactor.

It localises to the cytoplasm. The catalysed reaction is Endonucleolytic cleavage at a junction such as a reciprocal single-stranded crossover between two homologous DNA duplexes (Holliday junction).. The RuvA-RuvB-RuvC complex processes Holliday junction (HJ) DNA during genetic recombination and DNA repair. Endonuclease that resolves HJ intermediates. Cleaves cruciform DNA by making single-stranded nicks across the HJ at symmetrical positions within the homologous arms, yielding a 5'-phosphate and a 3'-hydroxyl group; requires a central core of homology in the junction. The consensus cleavage sequence is 5'-(A/T)TT(C/G)-3'. Cleavage occurs on the 3'-side of the TT dinucleotide at the point of strand exchange. HJ branch migration catalyzed by RuvA-RuvB allows RuvC to scan DNA until it finds its consensus sequence, where it cleaves and resolves the cruciform DNA. The polypeptide is Crossover junction endodeoxyribonuclease RuvC (Chromohalobacter salexigens (strain ATCC BAA-138 / DSM 3043 / CIP 106854 / NCIMB 13768 / 1H11)).